A 413-amino-acid chain; its full sequence is Ras association domain-containing protein 5 (413 aa).

The disordered stretch occupies residues 1-103 (MASPAIGQRP…RPRDVRSIFE (103 aa)). Basic and acidic residues predominate over residues 52–74 (SEDRGGRRSGRRDPEPTPRDCRH). The Phorbol-ester/DAG-type zinc-finger motif lies at 117–165 (GHRFVELALRGGPGWCDLCGREVLRQALRCANCKFTCHSECRSLIQLDC). A phosphoserine mark is found at S177 and S274. In terms of domain architecture, Ras-associating spans 265–359 (PAATTDKRTS…LSFVLKENET (95 aa)). A Phosphothreonine modification is found at T347. Residues 361-408 (EVEWDAFSIPELQNFLTILEKEEQDKIHQLQKKYNKFRQKLEEALRES) enclose the SARAH domain.

As to quaternary structure, interacts directly with activated HRAS; a RASSF5-STK4/MST1 complex probably associates with activated HRAS. Interacts with KRAS. Probably interacts with Ras-like GTPases RRAS, MRAS, RAP1B, RAP2A and RALA. Interacts with RRAS2. Can self-associate. Interacts with RSSF1 isoform A. The RSSF1 isoform A-RSSF5 heterodimer probably mediates the association of RSSF1 with HRAS. Isoform 2 interacts with activated RAP1A and ITGAL/LFA-1. Binds STK4/MST1, inhibiting STK4/MST1 autoactivation.

It localises to the cytoplasm. It is found in the cytoskeleton. Its function is as follows. Potential tumor suppressor. Seems to be involved in lymphocyte adhesion by linking RAP1A activation upon T-cell receptor or chemokine stimulation to integrin activation. Isoform 2 stimulates lymphocyte polarization and the patch-like distribution of ITGAL/LFA-1, resulting in an enhanced adhesion to ICAM1. Together with RAP1A may participate in regulation of microtubule growth. The association of isoform 2 with activated RAP1A is required for directional movement of endothelial cells during wound healing. May be involved in regulation of Ras apoptotic function. The RASSF5-STK4/MST1 complex may mediate HRAS and KRAS induced apoptosis. The sequence is that of Ras association domain-containing protein 5 (Rassf5) from Mus musculus (Mouse).